Reading from the N-terminus, the 714-residue chain is Polyribonucleotide nucleotidyltransferase (714 aa).

Residues Asp-496 and Asp-502 each coordinate Mg(2+). Residues 562–621 (PRLLTIKIDPDLIGMVIGPGGKTIKGITEQTRAKVDIADDGTVTIASSESENAEKAKRLI) enclose the KH domain. The S1 motif domain maps to 631-699 (GDVYFGKVTR…NKGRINLTRL (69 aa)).

This sequence belongs to the polyribonucleotide nucleotidyltransferase family. Mg(2+) is required as a cofactor.

The protein resides in the cytoplasm. It carries out the reaction RNA(n+1) + phosphate = RNA(n) + a ribonucleoside 5'-diphosphate. Involved in mRNA degradation. Catalyzes the phosphorolysis of single-stranded polyribonucleotides processively in the 3'- to 5'-direction. This Picosynechococcus sp. (strain ATCC 27264 / PCC 7002 / PR-6) (Agmenellum quadruplicatum) protein is Polyribonucleotide nucleotidyltransferase.